Reading from the N-terminus, the 884-residue chain is Putative GTP diphosphokinase RSH1, chloroplastic (884 aa).

The transit peptide at 1–55 (MTSASSMSVSVECVNICNLTKGDGNARSDCSALSCAWKAPRALTGFLASTAHPPV) directs the protein to the chloroplast. The 108-residue stretch at 172–279 (FIIHPVAVAR…VKLADRLHNM (108 aa)) folds into the HD domain. The region spanning 563–626 (LGSRVFVFTP…ENAEVVEIVT (64 aa)) is the TGS domain. Over residues 711–727 (QSQDKSRDTTPAPQNGS) the composition is skewed to polar residues. The tract at residues 711–747 (QSQDKSRDTTPAPQNGSVWAPKVNGKHNKAIKNSSSD) is disordered. One can recognise an ACT domain in the interval 797-868 (WLCVVSMDRK…LVLGVLGWSS (72 aa)).

Belongs to the RelA/SpoT family. Interacts with RPP4. Interacts with RPP5. Expressed in hypocotyls, shoots, cotyledons, rosette leaves, sepals and pistils.

Its subcellular location is the plastid. It localises to the chloroplast. It carries out the reaction GTP + ATP = guanosine 3'-diphosphate 5'-triphosphate + AMP. Functionally, may be involved in a rapid plant ppGpp (guanosine 3'-diphosphate 5'-diphosphate)-mediated response to pathogens and other stresses. Unable to functionally complement E.coli relA mutants. The protein is Putative GTP diphosphokinase RSH1, chloroplastic (RSH1) of Arabidopsis thaliana (Mouse-ear cress).